Here is a 189-residue protein sequence, read N- to C-terminus: Nuclear distribution protein nudE homolog 1 (189 aa).

A coiled-coil region spans residues 4 to 121 (NLDLETAIQI…LRVSKEEATS (118 aa)). The segment covering 114-126 (VSKEEATSGETRR) has biased composition (basic and acidic residues). The disordered stretch occupies residues 114–139 (VSKEEATSGETRRNTRSLPSQNKKMK).

It belongs to the nudE family. In terms of assembly, self-associates. Interacts with PAC1.

It localises to the nucleus. The protein resides in the cytoplasm. The protein localises to the cytoskeleton. In terms of biological role, required for nuclear migration to the bud neck during cell division. Targets cytoplasmic dynein to microtubule plus ends thereby promoting dynein-mediated microtubule sliding along the bud cortex and consequently the movement of the mitotic spindle to the bud neck. The polypeptide is Nuclear distribution protein nudE homolog 1 (NDL1) (Saccharomyces cerevisiae (strain ATCC 204508 / S288c) (Baker's yeast)).